Reading from the N-terminus, the 797-residue chain is Trafficking protein particle complex subunit 12 (797 aa).

2 disordered regions span residues 1-257 (META…PSLS) and 286-338 (SNPN…VPES). A compositionally biased stretch (low complexity) spans 9 to 23 (QSPSEASPSAQAGPE). Basic and acidic residues predominate over residues 29–43 (MSREEESQPLYHEET). Residues 47 to 58 (GGDEFASEENEP) are compositionally biased toward acidic residues. Basic and acidic residues-rich tracts occupy residues 66–75 (FGDKLNEHMM) and 107–121 (ATDH…KEVV). S125 and S128 each carry phosphoserine. A Phosphothreonine modification is found at T130. A compositionally biased stretch (basic and acidic residues) spans 173-185 (VGPKDSLAPREEQ). Positions 206–216 (IFSQATATPSQ) are enriched in polar residues. A compositionally biased stretch (low complexity) spans 232–244 (SPSFSSTSETSAK). S234, S309, and S314 each carry phosphoserine. TPR repeat units follow at residues 607-640 (GRVL…YPEQ), 642-675 (PQLL…TQKL), 682-715 (IMVL…DPTN), and 716-749 (AVAN…DPRH).

Component of the multisubunit TRAPP (transport protein particle) complex, which includes at least TRAPPC2, TRAPPC2L, TRAPPC3, TRAPPC3L, TRAPPC4, TRAPPC5, TRAPPC8, TRAPPC9, TRAPPC10, TRAPPC11 and TRAPPC12. Interacts with CENPE. Phosphorylated as the cells enter mitosis but is dephosphorylated at or before the onset of anaphase. The phosphorylated form recruits CENPE to kinetochores more efficiently than the non-phosphorylated form.

The protein resides in the endoplasmic reticulum-Golgi intermediate compartment. It is found in the nucleus. Component of the TRAPP complex, which is involved in endoplasmic reticulum to Golgi apparatus trafficking at a very early stage. Also plays a role in chromosome congression, kinetochore assembly and stability and controls the recruitment of CENPE to the kinetochores. This chain is Trafficking protein particle complex subunit 12, found in Mus musculus (Mouse).